Here is a 447-residue protein sequence, read N- to C-terminus: Elongation factor 1-alpha (447 aa).

The tr-type G domain occupies 5–230 (KIHISIVVIG…DQINEPKRPS (226 aa)). Positions 14-21 (GHVDSGKS) are G1. 14-21 (GHVDSGKS) serves as a coordination point for GTP. An N6,N6-dimethyllysine modification is found at Lys-55. The segment at 70 to 74 (GITID) is G2. Position 79 is an N6,N6,N6-trimethyllysine (Lys-79). The interval 91 to 94 (DAPG) is G3. GTP-binding positions include 91-95 (DAPGH) and 153-156 (NKMD). Residues 153–156 (NKMD) are G4. Position 187 is an N6,N6,N6-trimethyllysine (Lys-187). The G5 stretch occupies residues 194-196 (SGF). An N6-methyllysine modification is found at Lys-261. At Glu-289 the chain carries 5-glutamyl glycerylphosphorylethanolamine. Lys-306 carries the post-translational modification N6,N6,N6-trimethyllysine. At Glu-362 the chain carries 5-glutamyl glycerylphosphorylethanolamine. Lys-396 is modified (N6,N6,N6-trimethyllysine).

This sequence belongs to the TRAFAC class translation factor GTPase superfamily. Classic translation factor GTPase family. EF-Tu/EF-1A subfamily.

The protein resides in the cytoplasm. Functionally, this protein promotes the GTP-dependent binding of aminoacyl-tRNA to the A-site of ribosomes during protein biosynthesis. The protein is Elongation factor 1-alpha (BLT63) of Hordeum vulgare (Barley).